A 343-amino-acid polypeptide reads, in one-letter code: Dehydrodolichyl diphosphate synthase complex subunit SRT1 (343 aa).

This sequence belongs to the UPP synthase family. In terms of assembly, forms an active dehydrodolichyl diphosphate synthase complex with NUS1. The cofactor is Mg(2+).

It is found in the lipid droplet. The catalysed reaction is n isopentenyl diphosphate + (2E,6E)-farnesyl diphosphate = a di-trans,poly-cis-polyprenyl diphosphate + n diphosphate. The protein operates within protein modification; protein glycosylation. With NUS1, forms the dehydrodolichyl diphosphate synthase (DDS) complex, an essential component of the dolichol monophosphate (Dol-P) biosynthetic machinery. Adds multiple copies of isopentenyl pyrophosphate (IPP) to farnesyl pyrophosphate (FPP) to produce dehydrodolichyl diphosphate (Dedol-PP), a precursor of dolichol which is utilized as a sugar carrier in protein glycosylation in the endoplasmic reticulum (ER). The protein is Dehydrodolichyl diphosphate synthase complex subunit SRT1 of Saccharomyces cerevisiae (strain ATCC 204508 / S288c) (Baker's yeast).